Consider the following 372-residue polypeptide: tRNA-specific 2-thiouridylase MnmA (372 aa).

ATP is bound by residues 16–23 and M42; that span reads GMSGGVDS. Residues 102-104 are interaction with target base in tRNA; it reads NPD. The Nucleophile role is filled by C107. C107 and C205 form a disulfide bridge. G132 serves as a coordination point for ATP. The interval 155–157 is interaction with tRNA; that stretch reads KDQ. C205 functions as the Cysteine persulfide intermediate in the catalytic mechanism. The interaction with tRNA stretch occupies residues 317–318; it reads RY.

The protein belongs to the MnmA/TRMU family.

It localises to the cytoplasm. The catalysed reaction is S-sulfanyl-L-cysteinyl-[protein] + uridine(34) in tRNA + AH2 + ATP = 2-thiouridine(34) in tRNA + L-cysteinyl-[protein] + A + AMP + diphosphate + H(+). In terms of biological role, catalyzes the 2-thiolation of uridine at the wobble position (U34) of tRNA, leading to the formation of s(2)U34. The chain is tRNA-specific 2-thiouridylase MnmA from Shewanella sp. (strain W3-18-1).